Reading from the N-terminus, the 328-residue chain is uncharacterized protein (328 aa).

The signal sequence occupies residues 1 to 32 (MFNFRLFSRRGKSLGLLAIVLLLFGFYSLKSS).

This sequence belongs to the glycosyltransferase 34 family.

Its subcellular location is the endoplasmic reticulum. This is an uncharacterized protein from Schizosaccharomyces pombe (strain 972 / ATCC 24843) (Fission yeast).